The primary structure comprises 495 residues: Probable cytosol aminopeptidase (495 aa).

The Mn(2+) site is built by lysine 264 and aspartate 269. Residue lysine 276 is part of the active site. Positions 287, 346, and 348 each coordinate Mn(2+). The active site involves arginine 350.

This sequence belongs to the peptidase M17 family. Mn(2+) is required as a cofactor.

The protein localises to the cytoplasm. The enzyme catalyses Release of an N-terminal amino acid, Xaa-|-Yaa-, in which Xaa is preferably Leu, but may be other amino acids including Pro although not Arg or Lys, and Yaa may be Pro. Amino acid amides and methyl esters are also readily hydrolyzed, but rates on arylamides are exceedingly low.. It catalyses the reaction Release of an N-terminal amino acid, preferentially leucine, but not glutamic or aspartic acids.. Presumably involved in the processing and regular turnover of intracellular proteins. Catalyzes the removal of unsubstituted N-terminal amino acids from various peptides. The polypeptide is Probable cytosol aminopeptidase (Geotalea uraniireducens (strain Rf4) (Geobacter uraniireducens)).